A 672-amino-acid chain; its full sequence is Beta-galactosidase bgaB (672 aa).

R109 lines the substrate pocket. C113 is a binding site for Zn(2+). N147 lines the substrate pocket. The Proton donor role is filled by E148. The Zn(2+) site is built by C156, C158, and C161. E303 serves as the catalytic Nucleophile. Residues W311 and E351–H354 contribute to the substrate site.

The protein belongs to the glycosyl hydrolase 42 family.

It catalyses the reaction Hydrolysis of terminal non-reducing beta-D-galactose residues in beta-D-galactosides.. Its activity is regulated as follows. By divalent metal ions. Fe(2+), Zn(2+), Cu(2+), Pb(2+) and Sn(2+) inhibit 52, 76.6, 85.3, 100 and 100% of the enzyme activity, respectively. Other metal cations and EDTA do not inhibit this enzyme. Thiol reagents 2-mercaptoethanol and dithiothreitol have no effect on the activity. Sulfhydryl group-blocking reagents p-chloromercuribenzoic acid and iodoacetic acid inhibit 86.2 and 74% of the enzyme activity, respectively. Its function is as follows. Hydrolyzes 6-bromo-2-naphthyl-beta-D-galactopyranoside and o-nitrophenyl-beta-D-galactopyranoside (ONPG). Possesses a high level of transgalactosylation activity. Hydrolyzes lactose in milk. The polypeptide is Beta-galactosidase bgaB (bgaB) (Geobacillus kaustophilus).